Here is a 310-residue protein sequence, read N- to C-terminus: Transcription initiation factor IIB (310 aa).

A TFIIB-type zinc finger spans residues Asp-9–Asp-41. Zn(2+)-binding residues include Cys-14, Cys-17, Cys-33, and Cys-36. 2 consecutive repeat copies span residues Ser-127 to Leu-210 and Asp-221 to Glu-302.

This sequence belongs to the TFIIB family.

Functionally, stabilizes TBP binding to an archaeal box-A promoter. Also responsible for recruiting RNA polymerase II to the pre-initiation complex (DNA-TBP-TFIIB). In Methanobrevibacter smithii (strain ATCC 35061 / DSM 861 / OCM 144 / PS), this protein is Transcription initiation factor IIB.